The chain runs to 430 residues: 26S protease regulatory subunit 6A (430 aa).

Position 218–225 (218–225) interacts with ATP; it reads GPPGTGKT.

This sequence belongs to the AAA ATPase family. As to quaternary structure, component of the 19S proteasome regulatory particle complex. The 26S proteasome consists of a 20S core particle (CP) and two 19S regulatory subunits (RP). The regulatory particle is made of a lid composed of 9 subunits, a base containing 6 ATPases including the PSMC3 homolog rpt-5 and few additional components.

The protein resides in the cytoplasm. It localises to the nucleus. Functionally, component of the 26S proteasome, a multiprotein complex involved in the ATP-dependent degradation of ubiquitinated proteins. This complex plays a key role in the maintenance of protein homeostasis by removing misfolded or damaged proteins, which could impair cellular functions, and by removing proteins whose functions are no longer required. Therefore, the proteasome participates in numerous cellular processes, including cell cycle progression, apoptosis, or DNA damage repair. Belongs to the heterohexameric ring of AAA (ATPases associated with diverse cellular activities) proteins that unfolds ubiquitinated target proteins that are concurrently translocated into a proteolytic chamber and degraded into peptides. This chain is 26S protease regulatory subunit 6A, found in Caenorhabditis elegans.